A 146-amino-acid polypeptide reads, in one-letter code: Anti-sigma F factor (146 aa).

It belongs to the anti-sigma-factor family.

The enzyme catalyses L-seryl-[protein] + ATP = O-phospho-L-seryl-[protein] + ADP + H(+). It carries out the reaction L-threonyl-[protein] + ATP = O-phospho-L-threonyl-[protein] + ADP + H(+). In terms of biological role, binds to sigma F and blocks its ability to form an RNA polymerase holoenzyme (E-sigma F). Phosphorylates SpoIIAA on a serine residue. This phosphorylation may enable SpoIIAA to act as an anti-anti-sigma factor that counteracts SpoIIAB and thus releases sigma F from inhibition. The chain is Anti-sigma F factor from Bacillus velezensis (strain DSM 23117 / BGSC 10A6 / LMG 26770 / FZB42) (Bacillus amyloliquefaciens subsp. plantarum).